The following is a 270-amino-acid chain: Acyl-[acyl-carrier-protein]--UDP-N-acetylglucosamine O-acyltransferase (270 aa).

This sequence belongs to the transferase hexapeptide repeat family. LpxA subfamily. As to quaternary structure, homotrimer.

The protein resides in the cytoplasm. The catalysed reaction is a (3R)-hydroxyacyl-[ACP] + UDP-N-acetyl-alpha-D-glucosamine = a UDP-3-O-[(3R)-3-hydroxyacyl]-N-acetyl-alpha-D-glucosamine + holo-[ACP]. It functions in the pathway glycolipid biosynthesis; lipid IV(A) biosynthesis; lipid IV(A) from (3R)-3-hydroxytetradecanoyl-[acyl-carrier-protein] and UDP-N-acetyl-alpha-D-glucosamine: step 1/6. Its function is as follows. Involved in the biosynthesis of lipid A, a phosphorylated glycolipid that anchors the lipopolysaccharide to the outer membrane of the cell. The chain is Acyl-[acyl-carrier-protein]--UDP-N-acetylglucosamine O-acyltransferase from Bartonella tribocorum (strain CIP 105476 / IBS 506).